The chain runs to 231 residues: 5'-methylthioadenosine/S-adenosylhomocysteine nucleosidase (231 aa).

The Proton acceptor role is filled by glutamate 12. Residues glycine 78, valine 153, and 174–175 (ME) each bind substrate. The active-site Proton donor is the aspartate 198.

The protein belongs to the PNP/UDP phosphorylase family. MtnN subfamily.

The catalysed reaction is S-adenosyl-L-homocysteine + H2O = S-(5-deoxy-D-ribos-5-yl)-L-homocysteine + adenine. It carries out the reaction S-methyl-5'-thioadenosine + H2O = 5-(methylsulfanyl)-D-ribose + adenine. The enzyme catalyses 5'-deoxyadenosine + H2O = 5-deoxy-D-ribose + adenine. The protein operates within amino-acid biosynthesis; L-methionine biosynthesis via salvage pathway; S-methyl-5-thio-alpha-D-ribose 1-phosphate from S-methyl-5'-thioadenosine (hydrolase route): step 1/2. In terms of biological role, catalyzes the irreversible cleavage of the glycosidic bond in both 5'-methylthioadenosine (MTA) and S-adenosylhomocysteine (SAH/AdoHcy) to adenine and the corresponding thioribose, 5'-methylthioribose and S-ribosylhomocysteine, respectively. Also cleaves 5'-deoxyadenosine, a toxic by-product of radical S-adenosylmethionine (SAM) enzymes, into 5-deoxyribose and adenine. This Vibrio cholerae serotype O1 (strain ATCC 39315 / El Tor Inaba N16961) protein is 5'-methylthioadenosine/S-adenosylhomocysteine nucleosidase.